The following is a 157-amino-acid chain: ATP synthase subunit b (157 aa).

The helical transmembrane segment at L7–L29 threads the bilayer.

The protein belongs to the ATPase B chain family. F-type ATPases have 2 components, F(1) - the catalytic core - and F(0) - the membrane proton channel. F(1) has five subunits: alpha(3), beta(3), gamma(1), delta(1), epsilon(1). F(0) has three main subunits: a(1), b(2) and c(10-14). The alpha and beta chains form an alternating ring which encloses part of the gamma chain. F(1) is attached to F(0) by a central stalk formed by the gamma and epsilon chains, while a peripheral stalk is formed by the delta and b chains.

The protein resides in the cell inner membrane. In terms of biological role, f(1)F(0) ATP synthase produces ATP from ADP in the presence of a proton or sodium gradient. F-type ATPases consist of two structural domains, F(1) containing the extramembraneous catalytic core and F(0) containing the membrane proton channel, linked together by a central stalk and a peripheral stalk. During catalysis, ATP synthesis in the catalytic domain of F(1) is coupled via a rotary mechanism of the central stalk subunits to proton translocation. Component of the F(0) channel, it forms part of the peripheral stalk, linking F(1) to F(0). This Nitrosomonas europaea (strain ATCC 19718 / CIP 103999 / KCTC 2705 / NBRC 14298) protein is ATP synthase subunit b.